The sequence spans 452 residues: Eukaryotic translation initiation factor 4B3 (452 aa).

The residue at position 2 (alanine 2) is an N-acetylalanine. Positions 20 to 282 (EEHEAELKQQ…PSGGSRPRLV (263 aa)) are disordered. A compositionally biased stretch (polar residues) spans 28–37 (QQPSPTNQKS). A compositionally biased stretch (basic and acidic residues) spans 98–110 (PRERSAEELDRSK). The segment covering 111–122 (LGGGFRSYGGGR) has biased composition (gly residues). Low complexity predominate over residues 126 to 136 (ESSSSRWGSSR). A compositionally biased stretch (basic and acidic residues) spans 137–156 (VSEDGERRGGGFNRDREPSR). 2 consecutive short sequence motifs (nuclear localization signal) follow at residues 172 to 179 (AKKPISGN) and 215 to 222 (PRRFVSSN). The span at 227 to 243 (DRFEKRGSFESLSRNRD) shows a compositional bias: basic and acidic residues. Phosphoserine occurs at positions 234, 270, and 300. Positions 265–280 (GAANGSPPPSGGSRPR) are enriched in low complexity. Residues 349–452 (AAMEKPNEKS…AKKEETEDKI (104 aa)) are disordered. The segment covering 369–386 (GRKDEERIERSWRKSTEH) has biased composition (basic and acidic residues). A compositionally biased stretch (acidic residues) spans 387–397 (SEEDAQEEEPA). 2 stretches are compositionally biased toward basic and acidic residues: residues 400–419 (GAKKEETEDKPAVEEAKKEE) and 441–452 (EEAKKEETEDKI).

The protein belongs to the eIF-4 subunit B family. Homodimer. Nonspherical monomer. mRNA-discriminating component of initiation complexes. Interacts with MAD2. Post-translationally, phosphorylated.

The protein resides in the nucleus. In terms of biological role, promotes the eIF4F and eIF4A RNA-dependent ATP-hydrolysis activity with different efficiency depending on mRNAs, thus providing mRNA discrimination during initiation of translation. This is Eukaryotic translation initiation factor 4B3 from Arabidopsis thaliana (Mouse-ear cress).